The chain runs to 206 residues: Putative apoptosis inhibitor 021L (206 aa).

The span at 95–105 (TSKSPVSNQPS) shows a compositional bias: polar residues. Residues 95-114 (TSKSPVSNQPSPEEDEPIPD) form a disordered region. Residues 157 to 195 (CVVCQANVRNVVFVPCNHLATCISCSANPLMPKKCPMCR) form an RING-type zinc finger.

This sequence belongs to the IIV-6 193R family.

Its function is as follows. Plays a role early in infection by preventing host cell apoptosis. In Aedes vexans (Inland floodwater mosquito), this protein is Putative apoptosis inhibitor 021L.